The sequence spans 289 residues: Phosphatidylglycerol--prolipoprotein diacylglyceryl transferase (289 aa).

A run of 3 helical transmembrane segments spans residues 24-44 (GIAI…VYLL), 70-90 (GGVL…DWFL), and 111-131 (GING…LWLF). Arg-158 contributes to the a 1,2-diacyl-sn-glycero-3-phospho-(1'-sn-glycerol) binding site. The next 2 membrane-spanning stretches (helical) occupy residues 219-239 (GYLS…IEFF) and 253-273 (FSMG…ILVW).

Belongs to the Lgt family.

It is found in the cell inner membrane. The catalysed reaction is L-cysteinyl-[prolipoprotein] + a 1,2-diacyl-sn-glycero-3-phospho-(1'-sn-glycerol) = an S-1,2-diacyl-sn-glyceryl-L-cysteinyl-[prolipoprotein] + sn-glycerol 1-phosphate + H(+). The protein operates within protein modification; lipoprotein biosynthesis (diacylglyceryl transfer). In terms of biological role, catalyzes the transfer of the diacylglyceryl group from phosphatidylglycerol to the sulfhydryl group of the N-terminal cysteine of a prolipoprotein, the first step in the formation of mature lipoproteins. This Chlorobaculum tepidum (strain ATCC 49652 / DSM 12025 / NBRC 103806 / TLS) (Chlorobium tepidum) protein is Phosphatidylglycerol--prolipoprotein diacylglyceryl transferase.